We begin with the raw amino-acid sequence, 259 residues long: Probable metal transport system ATP-binding protein CPn_0348/CP_0412/CPj0348/CpB0355 (259 aa).

The ABC transporter domain maps to 3–241 (VKDETFWSVH…TIFQTYGCEI (239 aa)). 41-48 (GPNGAGKS) contacts ATP.

It belongs to the ABC transporter superfamily.

The protein localises to the cell inner membrane. Its function is as follows. Part of an ATP-driven transport system CPn0346/CPn0347/CPn0348/CPn0349 for a metal. Probably responsible for energy coupling to the transport system. In Chlamydia pneumoniae (Chlamydophila pneumoniae), this protein is Probable metal transport system ATP-binding protein CPn_0348/CP_0412/CPj0348/CpB0355.